The following is a 269-amino-acid chain: Phosphate import ATP-binding protein PstB (269 aa).

Residues 23 to 264 (IATRNLEFYY…PSKQQTEDYI (242 aa)) form the ABC transporter domain. 55 to 62 (GPSGCGKS) lines the ATP pocket.

This sequence belongs to the ABC transporter superfamily. Phosphate importer (TC 3.A.1.7) family. As to quaternary structure, the complex is composed of two ATP-binding proteins (PstB), two transmembrane proteins (PstC and PstA) and a solute-binding protein (PstS).

The protein resides in the cell inner membrane. It catalyses the reaction phosphate(out) + ATP + H2O = ADP + 2 phosphate(in) + H(+). Its function is as follows. Part of the ABC transporter complex PstSACB involved in phosphate import. Responsible for energy coupling to the transport system. This chain is Phosphate import ATP-binding protein PstB, found in Xylella fastidiosa (strain Temecula1 / ATCC 700964).